A 261-amino-acid polypeptide reads, in one-letter code: Phosphatidylglycerol--prolipoprotein diacylglyceryl transferase (261 aa).

The next 7 membrane-spanning stretches (helical) occupy residues 19–39, 56–76, 92–112, 126–146, 173–193, 199–219, and 227–247; these read VHWYGLMYLVGFAMAWGLALY, LIFYGALGLIIGGRLGYMLFY, WRGGMSFHGGLIGVIVTTWIF, FVVPLVPLGLAAGRIGNFING, QLYEFLLEGVLLFIVIWWFSA, FAVSSLFLLCYGLFRFTAEFF, and GFVAFGWLTRGQELSLPMIII. A 1,2-diacyl-sn-glycero-3-phospho-(1'-sn-glycerol) is bound at residue Arg139.

This sequence belongs to the Lgt family.

Its subcellular location is the cell inner membrane. It catalyses the reaction L-cysteinyl-[prolipoprotein] + a 1,2-diacyl-sn-glycero-3-phospho-(1'-sn-glycerol) = an S-1,2-diacyl-sn-glyceryl-L-cysteinyl-[prolipoprotein] + sn-glycerol 1-phosphate + H(+). The protein operates within protein modification; lipoprotein biosynthesis (diacylglyceryl transfer). In terms of biological role, catalyzes the transfer of the diacylglyceryl group from phosphatidylglycerol to the sulfhydryl group of the N-terminal cysteine of a prolipoprotein, the first step in the formation of mature lipoproteins. This is Phosphatidylglycerol--prolipoprotein diacylglyceryl transferase from Coxiella burnetii (strain CbuK_Q154) (Coxiella burnetii (strain Q154)).